Consider the following 424-residue polypeptide: NADH-quinone oxidoreductase subunit H (424 aa).

Transmembrane regions (helical) follow at residues 11-31 (LVVAKAIAIFVFLMLTVLVAI), 79-99 (FVYFVAPIISVIPAFTAFAFI), 119-139 (LPVAVLFILGLSAIGVYGIVL), 160-180 (VISYEVAMGLSFAAVFLYAGS), 193-213 (VWYIFLLLPSFVIYLISMVGE), 255-275 (VSALAATLFLGGWHAPWPLNL), 283-303 (WWPVLWFTAKVWGFLFMYFWL), 317-337 (ALGWKLLIPVSLVWVLIAAVI), and 347-367 (YWTPALVVSSIVVAAILVMSL). Residues 376-424 (AVTKARRRGKQPAAGPDEQGALEPLFPTPPLPMKPLAQPVGASKENARG) are disordered.

The protein belongs to the complex I subunit 1 family. NDH-1 is composed of 14 different subunits. Subunits NuoA, H, J, K, L, M, N constitute the membrane sector of the complex.

The protein localises to the cell membrane. The catalysed reaction is a quinone + NADH + 5 H(+)(in) = a quinol + NAD(+) + 4 H(+)(out). Its function is as follows. NDH-1 shuttles electrons from NADH, via FMN and iron-sulfur (Fe-S) centers, to quinones in the respiratory chain. The immediate electron acceptor for the enzyme in this species is believed to be menaquinone. Couples the redox reaction to proton translocation (for every two electrons transferred, four hydrogen ions are translocated across the cytoplasmic membrane), and thus conserves the redox energy in a proton gradient. This subunit may bind ubiquinone. The sequence is that of NADH-quinone oxidoreductase subunit H from Mycobacterium ulcerans (strain Agy99).